The primary structure comprises 154 residues: Small ribosomal subunit protein uS13m (154 aa).

A mitochondrion-targeting transit peptide spans 1–30 (MLGLRRSATTLFDISQSLLRNVTFHGLRVQ). The tract at residues 121-154 (RHGLPCRGQRTSTNARTKKGKAVAIAGKKKAPRK) is disordered. A compositionally biased stretch (basic residues) spans 136–154 (RTKKGKAVAIAGKKKAPRK).

The protein belongs to the universal ribosomal protein uS13 family. Part of the small ribosomal subunit.

It localises to the mitochondrion. Located at the top of the head of the small subunit, it contacts several helices of the 18S rRNA. In Arabidopsis thaliana (Mouse-ear cress), this protein is Small ribosomal subunit protein uS13m (RPS13).